We begin with the raw amino-acid sequence, 201 residues long: Probable nicotinate-nucleotide adenylyltransferase (201 aa).

Belongs to the NadD family.

The catalysed reaction is nicotinate beta-D-ribonucleotide + ATP + H(+) = deamido-NAD(+) + diphosphate. Its pathway is cofactor biosynthesis; NAD(+) biosynthesis; deamido-NAD(+) from nicotinate D-ribonucleotide: step 1/1. In terms of biological role, catalyzes the reversible adenylation of nicotinate mononucleotide (NaMN) to nicotinic acid adenine dinucleotide (NaAD). The chain is Probable nicotinate-nucleotide adenylyltransferase from Clostridium botulinum (strain ATCC 19397 / Type A).